A 714-amino-acid chain; its full sequence is Fatty acid oxidation complex subunit alpha (714 aa).

Residues 1–190 (MEMASAFTLN…KLGLVDDVVP (190 aa)) form an enoyl-CoA hydratase region. A 3-hydroxyacyl-CoA dehydrogenase region spans residues 306 to 714 (APLNSVGILG…FWKTTATDLQ (409 aa)).

In the N-terminal section; belongs to the enoyl-CoA hydratase/isomerase family. The protein in the central section; belongs to the 3-hydroxyacyl-CoA dehydrogenase family. In terms of assembly, heterotetramer of two alpha chains (FadJ) and two beta chains (FadI).

The protein localises to the cytoplasm. The catalysed reaction is a (3S)-3-hydroxyacyl-CoA = a (2E)-enoyl-CoA + H2O. It catalyses the reaction a 4-saturated-(3S)-3-hydroxyacyl-CoA = a (3E)-enoyl-CoA + H2O. The enzyme catalyses a (3S)-3-hydroxyacyl-CoA + NAD(+) = a 3-oxoacyl-CoA + NADH + H(+). It carries out the reaction (3S)-3-hydroxybutanoyl-CoA = (3R)-3-hydroxybutanoyl-CoA. Its pathway is lipid metabolism; fatty acid beta-oxidation. In terms of biological role, catalyzes the formation of a hydroxyacyl-CoA by addition of water on enoyl-CoA. Also exhibits 3-hydroxyacyl-CoA epimerase and 3-hydroxyacyl-CoA dehydrogenase activities. The chain is Fatty acid oxidation complex subunit alpha from Escherichia coli O6:H1 (strain CFT073 / ATCC 700928 / UPEC).